Here is a 190-residue protein sequence, read N- to C-terminus: Heme-binding protein 1 (190 aa).

This sequence belongs to the HEBP family. Monomer.

It is found in the cytoplasm. Functionally, may bind free porphyrinogens that may be present in the cell and thus facilitate removal of these potentially toxic compound. Binds with a high affinity to one molecule of heme or porphyrins. It binds metalloporphyrins, free porphyrins and N-methylprotoporphyrin with similar affinities. This chain is Heme-binding protein 1 (hebp1), found in Xenopus tropicalis (Western clawed frog).